The sequence spans 143 residues: Fluoride-specific ion channel FluC 1 (143 aa).

Helical transmembrane passes span 13–33 (VLVG…SVIA), 42–62 (GVPW…ATLL), 80–100 (LCIG…TVEA), and 111–131 (WGIA…WVVI). Residues Gly-88 and Thr-91 each contribute to the Na(+) site.

The protein belongs to the fluoride channel Fluc/FEX (TC 1.A.43) family.

The protein localises to the cell membrane. The enzyme catalyses fluoride(in) = fluoride(out). Its activity is regulated as follows. Na(+) is not transported, but it plays an essential structural role and its presence is essential for fluoride channel function. Functionally, fluoride-specific ion channel. Important for reducing fluoride concentration in the cell, thus reducing its toxicity. In Cutibacterium acnes (strain DSM 16379 / KPA171202) (Propionibacterium acnes), this protein is Fluoride-specific ion channel FluC 1.